Consider the following 115-residue polypeptide: Insulin (115 aa).

The first 22 residues, 1-22 (MAALWLQSVSLLVLMLVSWSGS), serve as a signal peptide directing secretion. 3 cysteine pairs are disulfide-bonded: C32–C101, C44–C114, and C100–C105. A propeptide spans 56–92 (DVDPLLGFLPAKSGGAAAGGENEVAEFAFKDQMEMMV) (c peptide).

This sequence belongs to the insulin family. As to quaternary structure, heterodimer of a B chain and an A chain linked by two disulfide bonds.

Its subcellular location is the secreted. Insulin decreases blood glucose concentration. It increases cell permeability to monosaccharides, amino acids and fatty acids. It accelerates glycolysis, the pentose phosphate cycle, and glycogen synthesis in liver. In Verasper moseri (Barfin flounder), this protein is Insulin (ins).